The following is a 341-amino-acid chain: Methionine import ATP-binding protein MetN (341 aa).

Residues 6 to 247 form the ABC transporter domain; sequence IEIKKLSKNF…PQHQATRHLL (242 aa). 44-51 is a binding site for ATP; sequence GMSGAGKS.

The protein belongs to the ABC transporter superfamily. Methionine importer (TC 3.A.1.24) family. As to quaternary structure, the complex is composed of two ATP-binding proteins (MetN), two transmembrane proteins (MetI) and a solute-binding protein (MetQ).

The protein resides in the cell inner membrane. It carries out the reaction L-methionine(out) + ATP + H2O = L-methionine(in) + ADP + phosphate + H(+). It catalyses the reaction D-methionine(out) + ATP + H2O = D-methionine(in) + ADP + phosphate + H(+). Part of the ABC transporter complex MetNIQ involved in methionine import. Responsible for energy coupling to the transport system. The sequence is that of Methionine import ATP-binding protein MetN from Protochlamydia amoebophila (strain UWE25).